A 110-amino-acid chain; its full sequence is Large ribosomal subunit protein uL22 (110 aa).

It belongs to the universal ribosomal protein uL22 family. In terms of assembly, part of the 50S ribosomal subunit.

Its function is as follows. This protein binds specifically to 23S rRNA; its binding is stimulated by other ribosomal proteins, e.g. L4, L17, and L20. It is important during the early stages of 50S assembly. It makes multiple contacts with different domains of the 23S rRNA in the assembled 50S subunit and ribosome. The globular domain of the protein is located near the polypeptide exit tunnel on the outside of the subunit, while an extended beta-hairpin is found that lines the wall of the exit tunnel in the center of the 70S ribosome. This is Large ribosomal subunit protein uL22 from Mycoplasmopsis pulmonis (strain UAB CTIP) (Mycoplasma pulmonis).